Reading from the N-terminus, the 464-residue chain is Uronate isomerase (464 aa).

It belongs to the metallo-dependent hydrolases superfamily. Uronate isomerase family.

It carries out the reaction D-glucuronate = D-fructuronate. The catalysed reaction is aldehydo-D-galacturonate = keto-D-tagaturonate. It participates in carbohydrate metabolism; pentose and glucuronate interconversion. In Caldicellulosiruptor bescii (strain ATCC BAA-1888 / DSM 6725 / KCTC 15123 / Z-1320) (Anaerocellum thermophilum), this protein is Uronate isomerase.